Here is a 130-residue protein sequence, read N- to C-terminus: Small ribosomal subunit protein uS8 (130 aa).

Belongs to the universal ribosomal protein uS8 family.

The chain is Small ribosomal subunit protein uS8 (RPS22A) from Eremothecium gossypii (strain ATCC 10895 / CBS 109.51 / FGSC 9923 / NRRL Y-1056) (Yeast).